We begin with the raw amino-acid sequence, 385 residues long: Pre-mRNA-splicing factor slt-11 (385 aa).

Residues 157–233 (RKGREVDEEG…PPGPKDWLPP (77 aa)) are disordered. A compositionally biased stretch (low complexity) spans 171–187 (GSSSGAGRATGGNPAVG). Residues 239–312 (MSLFVTGIED…CPLRVRWSVP (74 aa)) form the RRM domain. The segment covering 320–331 (KEQRSEMLRDGR) has biased composition (basic and acidic residues). The interval 320–370 (KEQRSEMLRDGRSAFGSGQKTGGQKAIGGQNAQGGASGAQKDDASNLTIAA) is disordered.

It belongs to the SLT11 family. Associated with the spliceosome.

The protein resides in the nucleus. Functionally, involved in pre-mRNA splicing. Facilitates the cooperative formation of U2/U6 helix II in association with stem II in the spliceosome. Binds to RNA. The sequence is that of Pre-mRNA-splicing factor slt-11 (slt-11) from Neurospora crassa (strain ATCC 24698 / 74-OR23-1A / CBS 708.71 / DSM 1257 / FGSC 987).